The following is a 192-amino-acid chain: Probable nicotinate-nucleotide adenylyltransferase (192 aa).

It belongs to the NadD family.

It carries out the reaction nicotinate beta-D-ribonucleotide + ATP + H(+) = deamido-NAD(+) + diphosphate. It participates in cofactor biosynthesis; NAD(+) biosynthesis; deamido-NAD(+) from nicotinate D-ribonucleotide: step 1/1. Catalyzes the reversible adenylation of nicotinate mononucleotide (NaMN) to nicotinic acid adenine dinucleotide (NaAD). This chain is Probable nicotinate-nucleotide adenylyltransferase, found in Cytophaga hutchinsonii (strain ATCC 33406 / DSM 1761 / CIP 103989 / NBRC 15051 / NCIMB 9469 / D465).